A 157-amino-acid chain; its full sequence is Small ribosomal subunit protein uS7 (157 aa).

This sequence belongs to the universal ribosomal protein uS7 family. In terms of assembly, part of the 30S ribosomal subunit. Contacts proteins S9 and S11.

In terms of biological role, one of the primary rRNA binding proteins, it binds directly to 16S rRNA where it nucleates assembly of the head domain of the 30S subunit. Is located at the subunit interface close to the decoding center, probably blocks exit of the E-site tRNA. The protein is Small ribosomal subunit protein uS7 of Bdellovibrio bacteriovorus (strain ATCC 15356 / DSM 50701 / NCIMB 9529 / HD100).